Reading from the N-terminus, the 232-residue chain is Histone H1A (232 aa).

Low complexity predominate over residues 1 to 18 (MSDPAVEVTPAVPVASPA). 2 disordered regions span residues 1 to 42 (MSDP…THLP) and 98 to 232 (LQTK…AKKA). The region spanning 39 to 113 (THLPVSDMVV…GASGSFKLPA (75 aa)) is the H15 domain. Basic residues-rich tracts occupy residues 131 to 141 (KPKKAAAPKPK), 147 to 173 (KVKK…KTTK), 181 to 214 (AAKK…KAKK), and 222 to 232 (KAAKKPAAKKA).

Belongs to the histone H1/H5 family.

It localises to the nucleus. It is found in the chromosome. Its function is as follows. Histones H1 are necessary for the condensation of nucleosome chains into higher-order structures. This chain is Histone H1A, found in Chironomus tentans (Midge).